Consider the following 835-residue polypeptide: Leucine--tRNA ligase (835 aa).

The 'HIGH' region motif lies at Pro-36 to His-46. A 'KMSKS' region motif is present at residues Lys-602–Ser-606. Residue Lys-605 participates in ATP binding.

It belongs to the class-I aminoacyl-tRNA synthetase family.

Its subcellular location is the cytoplasm. The catalysed reaction is tRNA(Leu) + L-leucine + ATP = L-leucyl-tRNA(Leu) + AMP + diphosphate. This Rickettsia massiliae (strain Mtu5) protein is Leucine--tRNA ligase.